A 552-amino-acid polypeptide reads, in one-letter code: Urocanate hydratase (552 aa).

NAD(+) is bound by residues 49-50, Gln127, 173-175, Asp193, 239-240, 260-264, 270-271, and Tyr319; these read GG, GMG, NA, QTSAH, and YI. Cys407 is an active-site residue. Residue Gly489 coordinates NAD(+).

This sequence belongs to the urocanase family. NAD(+) serves as cofactor.

It is found in the cytoplasm. The enzyme catalyses 4-imidazolone-5-propanoate = trans-urocanate + H2O. It functions in the pathway amino-acid degradation; L-histidine degradation into L-glutamate; N-formimidoyl-L-glutamate from L-histidine: step 2/3. Catalyzes the conversion of urocanate to 4-imidazolone-5-propionate. This Bacillus thuringiensis (strain Al Hakam) protein is Urocanate hydratase.